The chain runs to 482 residues: tRNA sulfurtransferase (482 aa).

Residues 61-165 form the THUMP domain; the sequence is EAIRDALTRI…QDRLLLIKSR (105 aa). Residues 183 to 184, Lys-265, Gly-287, and Gln-296 contribute to the ATP site; that span reads LI. A disulfide bridge connects residues Cys-344 and Cys-456. The region spanning 404 to 482 is the Rhodanese domain; that stretch reads FVPTDVLLDI…GFSNVKVYRP (79 aa). Cys-456 serves as the catalytic Cysteine persulfide intermediate.

The protein belongs to the ThiI family.

It is found in the cytoplasm. The enzyme catalyses [ThiI sulfur-carrier protein]-S-sulfanyl-L-cysteine + a uridine in tRNA + 2 reduced [2Fe-2S]-[ferredoxin] + ATP + H(+) = [ThiI sulfur-carrier protein]-L-cysteine + a 4-thiouridine in tRNA + 2 oxidized [2Fe-2S]-[ferredoxin] + AMP + diphosphate. The catalysed reaction is [ThiS sulfur-carrier protein]-C-terminal Gly-Gly-AMP + S-sulfanyl-L-cysteinyl-[cysteine desulfurase] + AH2 = [ThiS sulfur-carrier protein]-C-terminal-Gly-aminoethanethioate + L-cysteinyl-[cysteine desulfurase] + A + AMP + 2 H(+). The protein operates within cofactor biosynthesis; thiamine diphosphate biosynthesis. Functionally, catalyzes the ATP-dependent transfer of a sulfur to tRNA to produce 4-thiouridine in position 8 of tRNAs, which functions as a near-UV photosensor. Also catalyzes the transfer of sulfur to the sulfur carrier protein ThiS, forming ThiS-thiocarboxylate. This is a step in the synthesis of thiazole, in the thiamine biosynthesis pathway. The sulfur is donated as persulfide by IscS. The chain is tRNA sulfurtransferase from Pectobacterium atrosepticum (strain SCRI 1043 / ATCC BAA-672) (Erwinia carotovora subsp. atroseptica).